A 920-amino-acid polypeptide reads, in one-letter code: Isoleucine--tRNA ligase (920 aa).

A 'HIGH' region motif is present at residues 57 to 67 (PYANGDIHLGH). An L-isoleucyl-5'-AMP-binding site is contributed by E560. The 'KMSKS' region motif lies at 601-605 (KMSKS). K604 serves as a coordination point for ATP. Positions 890, 893, 910, and 913 each coordinate Zn(2+).

Belongs to the class-I aminoacyl-tRNA synthetase family. IleS type 1 subfamily. Monomer. It depends on Zn(2+) as a cofactor.

The protein resides in the cytoplasm. The enzyme catalyses tRNA(Ile) + L-isoleucine + ATP = L-isoleucyl-tRNA(Ile) + AMP + diphosphate. Catalyzes the attachment of isoleucine to tRNA(Ile). As IleRS can inadvertently accommodate and process structurally similar amino acids such as valine, to avoid such errors it has two additional distinct tRNA(Ile)-dependent editing activities. One activity is designated as 'pretransfer' editing and involves the hydrolysis of activated Val-AMP. The other activity is designated 'posttransfer' editing and involves deacylation of mischarged Val-tRNA(Ile). The chain is Isoleucine--tRNA ligase from Caldicellulosiruptor saccharolyticus (strain ATCC 43494 / DSM 8903 / Tp8T 6331).